The following is a 179-amino-acid chain: Peptidyl-tRNA hydrolase (179 aa).

Position 15 (Y15) interacts with tRNA. The Proton acceptor role is filled by H20. Y66, N68, and N114 together coordinate tRNA.

This sequence belongs to the PTH family. Monomer.

It is found in the cytoplasm. It carries out the reaction an N-acyl-L-alpha-aminoacyl-tRNA + H2O = an N-acyl-L-amino acid + a tRNA + H(+). In terms of biological role, hydrolyzes ribosome-free peptidyl-tRNAs (with 1 or more amino acids incorporated), which drop off the ribosome during protein synthesis, or as a result of ribosome stalling. Catalyzes the release of premature peptidyl moieties from peptidyl-tRNA molecules trapped in stalled 50S ribosomal subunits, and thus maintains levels of free tRNAs and 50S ribosomes. This Chlamydia trachomatis serovar L2 (strain ATCC VR-902B / DSM 19102 / 434/Bu) protein is Peptidyl-tRNA hydrolase.